The chain runs to 405 residues: Arginine biosynthesis bifunctional protein ArgJ (405 aa).

Over residues 1 to 18 the composition is skewed to polar residues; the sequence is MTSADKNNPDTSTAQGSS. The segment at 1–21 is disordered; it reads MTSADKNNPDTSTAQGSSADL. Substrate-binding residues include threonine 167, lysine 189, threonine 200, glutamate 281, asparagine 400, and threonine 405. Threonine 200 acts as the Nucleophile in catalysis.

It belongs to the ArgJ family. Heterotetramer of two alpha and two beta chains.

It localises to the cytoplasm. It carries out the reaction N(2)-acetyl-L-ornithine + L-glutamate = N-acetyl-L-glutamate + L-ornithine. The enzyme catalyses L-glutamate + acetyl-CoA = N-acetyl-L-glutamate + CoA + H(+). It functions in the pathway amino-acid biosynthesis; L-arginine biosynthesis; L-ornithine and N-acetyl-L-glutamate from L-glutamate and N(2)-acetyl-L-ornithine (cyclic): step 1/1. Its pathway is amino-acid biosynthesis; L-arginine biosynthesis; N(2)-acetyl-L-ornithine from L-glutamate: step 1/4. Catalyzes two activities which are involved in the cyclic version of arginine biosynthesis: the synthesis of N-acetylglutamate from glutamate and acetyl-CoA as the acetyl donor, and of ornithine by transacetylation between N(2)-acetylornithine and glutamate. The sequence is that of Arginine biosynthesis bifunctional protein ArgJ from Corynebacterium jeikeium (strain K411).